A 200-amino-acid chain; its full sequence is Protein GrpE (200 aa).

The segment covering 1–23 (MEEEIKETSEDKEEENTEAEAVE) has biased composition (acidic residues). Residues 1-39 (MEEEIKETSEDKEEENTEAEAVENNEKSEENAGNVEEDE) form a disordered region.

Belongs to the GrpE family. Homodimer.

The protein resides in the cytoplasm. Functionally, participates actively in the response to hyperosmotic and heat shock by preventing the aggregation of stress-denatured proteins, in association with DnaK and GrpE. It is the nucleotide exchange factor for DnaK and may function as a thermosensor. Unfolded proteins bind initially to DnaJ; upon interaction with the DnaJ-bound protein, DnaK hydrolyzes its bound ATP, resulting in the formation of a stable complex. GrpE releases ADP from DnaK; ATP binding to DnaK triggers the release of the substrate protein, thus completing the reaction cycle. Several rounds of ATP-dependent interactions between DnaJ, DnaK and GrpE are required for fully efficient folding. This chain is Protein GrpE, found in Brachyspira hyodysenteriae (strain ATCC 49526 / WA1).